The primary structure comprises 293 residues: Indole-3-glycerol phosphate synthase (293 aa).

This sequence belongs to the TrpC family.

The enzyme catalyses 1-(2-carboxyphenylamino)-1-deoxy-D-ribulose 5-phosphate + H(+) = (1S,2R)-1-C-(indol-3-yl)glycerol 3-phosphate + CO2 + H2O. Its pathway is amino-acid biosynthesis; L-tryptophan biosynthesis; L-tryptophan from chorismate: step 4/5. This Rippkaea orientalis (strain PCC 8801 / RF-1) (Cyanothece sp. (strain PCC 8801)) protein is Indole-3-glycerol phosphate synthase.